Reading from the N-terminus, the 635-residue chain is Ligand-gated ion channel 4 (635 aa).

Residues methionine 1 to alanine 24 form the signal peptide. The Extracellular segment spans residues glycine 25 to tyrosine 324. N-linked (GlcNAc...) asparagine glycosylation is found at asparagine 46, asparagine 139, asparagine 177, and asparagine 225. The cysteines at positions 238 and 252 are disulfide-linked. An N-linked (GlcNAc...) asparagine glycan is attached at asparagine 282. Helical transmembrane passes span valine 325–methionine 345, methionine 355–proline 375, and valine 381–valine 401. The Cytoplasmic segment spans residues asparagine 402–leucine 599. The chain crosses the membrane as a helical span at residues leucine 600–valine 620. The N-linked (GlcNAc...) asparagine glycan is linked to asparagine 625.

This sequence belongs to the ligand-gated ion channel (TC 1.A.9) family.

It localises to the postsynaptic cell membrane. Its subcellular location is the cell membrane. Functionally, possible acetylcholine receptor. The sequence is that of Ligand-gated ion channel 4 (lgc-4) from Caenorhabditis elegans.